The chain runs to 559 residues: Inositol-3-phosphate synthase 1 (559 aa).

NAD(+) is bound by residues glycine 67, glycine 68, asparagine 69, asparagine 70, aspartate 141, serine 177, valine 178, glutamine 188, arginine 191, threonine 228, alanine 229, asparagine 230, threonine 231, glycine 278, serine 279, aspartate 303, serine 306, asparagine 337, asparagine 338, aspartate 339, and lysine 352. Serine 279 bears the Phosphoserine mark. Serine 357 is modified (phosphoserine). The NAD(+) site is built by glycine 390, aspartate 391, aspartate 419, and serine 420.

This sequence belongs to the myo-inositol 1-phosphate synthase family. NAD(+) is required as a cofactor.

It is found in the cytoplasm. The enzyme catalyses D-glucose 6-phosphate = 1D-myo-inositol 3-phosphate. Its pathway is polyol metabolism; myo-inositol biosynthesis; myo-inositol from D-glucose 6-phosphate: step 1/2. Functionally, key enzyme in myo-inositol biosynthesis pathway that catalyzes the conversion of glucose 6-phosphate to 1-myo-inositol 1-phosphate in a NAD-dependent manner. Rate-limiting enzyme in the synthesis of all inositol-containing compounds. The polypeptide is Inositol-3-phosphate synthase 1 (ISYNA1) (Macaca fascicularis (Crab-eating macaque)).